A 382-amino-acid polypeptide reads, in one-letter code: Anhydro-N-acetylmuramic acid kinase (382 aa).

9 to 16 (GTSLDGID) provides a ligand contact to ATP.

The protein belongs to the anhydro-N-acetylmuramic acid kinase family.

It carries out the reaction 1,6-anhydro-N-acetyl-beta-muramate + ATP + H2O = N-acetyl-D-muramate 6-phosphate + ADP + H(+). It participates in amino-sugar metabolism; 1,6-anhydro-N-acetylmuramate degradation. It functions in the pathway cell wall biogenesis; peptidoglycan recycling. Catalyzes the specific phosphorylation of 1,6-anhydro-N-acetylmuramic acid (anhMurNAc) with the simultaneous cleavage of the 1,6-anhydro ring, generating MurNAc-6-P. Is required for the utilization of anhMurNAc either imported from the medium or derived from its own cell wall murein, and thus plays a role in cell wall recycling. The chain is Anhydro-N-acetylmuramic acid kinase from Bacillus cereus (strain Q1).